Consider the following 149-residue polypeptide: Transcription antitermination protein NusB (149 aa).

This sequence belongs to the NusB family.

In terms of biological role, involved in transcription antitermination. Required for transcription of ribosomal RNA (rRNA) genes. Binds specifically to the boxA antiterminator sequence of the ribosomal RNA (rrn) operons. The chain is Transcription antitermination protein NusB from Hahella chejuensis (strain KCTC 2396).